A 102-amino-acid polypeptide reads, in one-letter code: Large ribosomal subunit protein bL21 (102 aa).

Belongs to the bacterial ribosomal protein bL21 family. As to quaternary structure, part of the 50S ribosomal subunit. Contacts protein L20.

Functionally, this protein binds to 23S rRNA in the presence of protein L20. This is Large ribosomal subunit protein bL21 from Exiguobacterium sp. (strain ATCC BAA-1283 / AT1b).